The following is a 580-amino-acid chain: Negative elongation factor B (580 aa).

Residue Lys519 is modified to N6-acetyllysine. Positions 548-580 (LEQLDHRKPSPAQAAETPALELPLPSVPAPAPL) are disordered. Residue Ser557 is modified to Phosphoserine.

This sequence belongs to the NELF-B family. The NELF complex is composed of NELFA, NELFB, NELFCD (isoform NELF-C or isoform NELF-D) and NELFE; the N-terminus of NELFB binds to the NELFA:NELFCD subcomplex. Binds RNA which may help to stabilize the NELF complex on nucleic acid. Interacts with the first BRCT repeat of BRCA1. Interacts with KIAA1191. Interacts with NELFE. In terms of tissue distribution, widely expressed. Expressed in heart, brain, lung, placenta, liver, skeletal muscle, kidney and pancreas.

It is found in the nucleus. In terms of biological role, essential component of the NELF complex, a complex that negatively regulates the elongation of transcription by RNA polymerase II. The NELF complex, which acts via an association with the DSIF complex and causes transcriptional pausing, is counteracted by the P-TEFb kinase complex. May be able to induce chromatin unfolding. Essential for early embryogenesis; plays an important role in maintaining the undifferentiated state of embryonic stem cells (ESCs) by preventing unscheduled expression of developmental genes. Plays a key role in establishing the responsiveness of stem cells to developmental cues; facilitates plasticity and cell fate commitment in ESCs by establishing the appropriate expression level of signaling molecules. Supports the transcription of genes involved in energy metabolism in cardiomyocytes; facilitates the association of transcription initiation factors with the promoters of the metabolism-related genes. (Microbial infection) The NELF complex is involved in HIV-1 latency possibly involving recruitment of PCF11 to paused RNA polymerase II. In vitro, binds weakly to the HIV-1 TAR RNA which is located in the long terminal repeat (LTR) of HIV-1. The protein is Negative elongation factor B (NELFB) of Homo sapiens (Human).